Here is a 214-residue protein sequence, read N- to C-terminus: Small ribosomal subunit protein uS5 (214 aa).

In terms of domain architecture, S5 DRBM spans 55 to 118; sequence LKYERLDVGI…RNAKLNITPV (64 aa).

This sequence belongs to the universal ribosomal protein uS5 family. As to quaternary structure, part of the 30S ribosomal subunit. Contacts protein S4.

Functionally, with S4 and S12 plays an important role in translational accuracy. The chain is Small ribosomal subunit protein uS5 from Staphylothermus marinus (strain ATCC 43588 / DSM 3639 / JCM 9404 / F1).